Reading from the N-terminus, the 135-residue chain is Endoribonuclease YbeY (135 aa).

Residues His-94, His-98, and His-104 each contribute to the Zn(2+) site.

It belongs to the endoribonuclease YbeY family. Requires Zn(2+) as cofactor.

It localises to the cytoplasm. Its function is as follows. Single strand-specific metallo-endoribonuclease involved in late-stage 70S ribosome quality control and in maturation of the 3' terminus of the 16S rRNA. The chain is Endoribonuclease YbeY from Campylobacter jejuni subsp. jejuni serotype O:2 (strain ATCC 700819 / NCTC 11168).